The sequence spans 509 residues: Glutamyl-tRNA(Gln) amidotransferase subunit B, mitochondrial (509 aa).

This sequence belongs to the GatB/GatE family. GatB subfamily. As to quaternary structure, subunit of the heterotrimeric GatFAB amidotransferase (AdT) complex, composed of A, B and F subunits.

The protein resides in the mitochondrion. It carries out the reaction L-glutamyl-tRNA(Gln) + L-glutamine + ATP + H2O = L-glutaminyl-tRNA(Gln) + L-glutamate + ADP + phosphate + H(+). In terms of biological role, allows the formation of correctly charged Gln-tRNA(Gln) through the transamidation of misacylated Glu-tRNA(Gln) in the mitochondria. The reaction takes place in the presence of glutamine and ATP through an activated gamma-phospho-Glu-tRNA(Gln). This is Glutamyl-tRNA(Gln) amidotransferase subunit B, mitochondrial from Candida dubliniensis (strain CD36 / ATCC MYA-646 / CBS 7987 / NCPF 3949 / NRRL Y-17841) (Yeast).